The following is a 31-amino-acid chain: Cytochrome b6-f complex subunit 6 (31 aa).

The chain crosses the membrane as a helical span at residues 3–23; the sequence is IITSYFGFLLTALTIASALFI.

It belongs to the PetL family. The 4 large subunits of the cytochrome b6-f complex are cytochrome b6, subunit IV (17 kDa polypeptide, PetD), cytochrome f and the Rieske protein, while the 4 small subunits are PetG, PetL, PetM and PetN. The complex functions as a dimer.

Its subcellular location is the plastid. It is found in the chloroplast thylakoid membrane. In terms of biological role, component of the cytochrome b6-f complex, which mediates electron transfer between photosystem II (PSII) and photosystem I (PSI), cyclic electron flow around PSI, and state transitions. PetL is important for photoautotrophic growth as well as for electron transfer efficiency and stability of the cytochrome b6-f complex. This Helianthus annuus (Common sunflower) protein is Cytochrome b6-f complex subunit 6.